A 968-amino-acid polypeptide reads, in one-letter code: Glycine dehydrogenase (decarboxylating) (968 aa).

Position 712 is an N6-(pyridoxal phosphate)lysine (Lys712).

This sequence belongs to the GcvP family. In terms of assembly, the glycine cleavage system is composed of four proteins: P, T, L and H. Requires pyridoxal 5'-phosphate as cofactor.

The enzyme catalyses N(6)-[(R)-lipoyl]-L-lysyl-[glycine-cleavage complex H protein] + glycine + H(+) = N(6)-[(R)-S(8)-aminomethyldihydrolipoyl]-L-lysyl-[glycine-cleavage complex H protein] + CO2. Its function is as follows. The glycine cleavage system catalyzes the degradation of glycine. The P protein binds the alpha-amino group of glycine through its pyridoxal phosphate cofactor; CO(2) is released and the remaining methylamine moiety is then transferred to the lipoamide cofactor of the H protein. This chain is Glycine dehydrogenase (decarboxylating), found in Prochlorococcus marinus (strain NATL1A).